A 702-amino-acid chain; its full sequence is MADS-box MEF2 type transcription factor MIG1 (702 aa).

The MADS-box domain maps to 1–61 (MGRRKIEIKA…KKLYEYSSGD (61 aa)). Disordered stretches follow at residues 73 to 608 (GGAT…NIDT) and 658 to 702 (PSFL…KVDS). Acidic residues predominate over residues 86 to 96 (GGDDDDEEEGD). Residues 132–144 (ASPPIPNGVPFPP) show a composition bias toward pro residues. The segment covering 145–155 (HGHGVPRGHTP) has biased composition (low complexity). The span at 180–195 (GSPQVNGFGFGQQQSM) shows a compositional bias: polar residues. The span at 201–241 (TTMPPHMPPQMAPGPPFPYPQHPQHPPHPPHPPHPPHPQQP) shows a compositional bias: pro residues. Low complexity-rich tracts occupy residues 273–284 (PMGMQRHSVSPP), 326–343 (ESPQQIEPPQHQHQQQPE), and 350–371 (EQQQQQQQSQQSQQPQEPQSEP). The span at 456–465 (VDESTSNASE) shows a compositional bias: polar residues. Composition is skewed to low complexity over residues 487-512 (RASISSVSSAPESAPAPPSRSNSLRA) and 530-553 (DGSGSATAESASSAQGGASTDATS). Over residues 554–567 (QSTRQNDSHSSTNM) the composition is skewed to polar residues. The span at 587-600 (PPNPFAPKRPPQHP) shows a compositional bias: pro residues. The segment covering 693–702 (NEPKRVKVDS) has biased composition (basic and acidic residues).

Belongs to the MEF2 family. In terms of assembly, interacts with MAPK MPS1.

The protein localises to the nucleus. Its function is as follows. Transcription factor acting downstream of the MPS1 MAP kinase (MAPK) cascade during conidiation and plant infection. Required for overcoming plant defense responses and the differentiation of secondary infectious hyphae in live plant cells. This is MADS-box MEF2 type transcription factor MIG1 from Pyricularia oryzae (Rice blast fungus).